The following is a 429-amino-acid chain: Probable M18 family aminopeptidase 2 (429 aa).

Zn(2+) contacts are provided by His82, His156, and His401.

Belongs to the peptidase M18 family. It depends on Zn(2+) as a cofactor.

In Pseudomonas putida (strain GB-1), this protein is Probable M18 family aminopeptidase 2.